A 1766-amino-acid polypeptide reads, in one-letter code: DNA-directed RNA polymerase II subunit RPB1-A (1766 aa).

Zn(2+) contacts are provided by C69, C72, C79, and H82. Positions 487, 489, and 491 each coordinate Mg(2+). Residues 813–825 (PHEFFFHTMAGRE) form a bridging helix region. The disordered stretch occupies residues 1660 to 1766 (HAMSSAAPPS…EFGDEEEEEQ (107 aa)). A compositionally biased stretch (basic and acidic residues) spans 1706-1716 (RGDEPSTHRSD). The segment covering 1742–1756 (PTAKTPQQAAPPTAA) has biased composition (low complexity).

Belongs to the RNA polymerase beta' chain family. Component of the RNA polymerase II (Pol II) complex consisting of 12 subunits.

It is found in the nucleus. The enzyme catalyses RNA(n) + a ribonucleoside 5'-triphosphate = RNA(n+1) + diphosphate. Its function is as follows. DNA-dependent RNA polymerase catalyzes the transcription of DNA into RNA using the four ribonucleoside triphosphates as substrates. Largest and catalytic component of RNA polymerase II which synthesizes mRNA precursors and many functional non-coding RNAs. Forms the polymerase active center together with the second largest subunit. Pol II is the central component of the basal RNA polymerase II transcription machinery. It is composed of mobile elements that move relative to each other. RPB1 is part of the core element with the central large cleft, the clamp element that moves to open and close the cleft and the jaws that are thought to grab the incoming DNA template. At the start of transcription, a single-stranded DNA template strand of the promoter is positioned within the central active site cleft of Pol II. A bridging helix emanates from RPB1 and crosses the cleft near the catalytic site and is thought to promote translocation of Pol II by acting as a ratchet that moves the RNA-DNA hybrid through the active site by switching from straight to bent conformations at each step of nucleotide addition. During transcription elongation, Pol II moves on the template as the transcript elongates. This chain is DNA-directed RNA polymerase II subunit RPB1-A (TRP4.8), found in Trypanosoma brucei brucei.